A 413-amino-acid chain; its full sequence is Serine hydroxymethyltransferase (413 aa).

(6S)-5,6,7,8-tetrahydrofolate is bound by residues leucine 119 and 123–125 (GHL). Lysine 228 carries the post-translational modification N6-(pyridoxal phosphate)lysine. Position 351 to 353 (351 to 353 (SPF)) interacts with (6S)-5,6,7,8-tetrahydrofolate.

The protein belongs to the SHMT family. In terms of assembly, homodimer. The cofactor is pyridoxal 5'-phosphate.

It is found in the cytoplasm. The enzyme catalyses (6R)-5,10-methylene-5,6,7,8-tetrahydrofolate + glycine + H2O = (6S)-5,6,7,8-tetrahydrofolate + L-serine. It participates in one-carbon metabolism; tetrahydrofolate interconversion. Its pathway is amino-acid biosynthesis; glycine biosynthesis; glycine from L-serine: step 1/1. In terms of biological role, catalyzes the reversible interconversion of serine and glycine with tetrahydrofolate (THF) serving as the one-carbon carrier. This reaction serves as the major source of one-carbon groups required for the biosynthesis of purines, thymidylate, methionine, and other important biomolecules. Also exhibits THF-independent aldolase activity toward beta-hydroxyamino acids, producing glycine and aldehydes, via a retro-aldol mechanism. This Clostridium botulinum (strain Langeland / NCTC 10281 / Type F) protein is Serine hydroxymethyltransferase.